The primary structure comprises 309 residues: Glutaminase (309 aa).

Substrate contacts are provided by S64, N114, E160, N167, Y191, Y243, and V261.

Belongs to the glutaminase family. In terms of assembly, homotetramer.

It carries out the reaction L-glutamine + H2O = L-glutamate + NH4(+). The chain is Glutaminase from Methylobacterium nodulans (strain LMG 21967 / CNCM I-2342 / ORS 2060).